Reading from the N-terminus, the 124-residue chain is Sulfiredoxin (124 aa).

It belongs to the sulfiredoxin family. As to quaternary structure, interacts with tpx1 in response to oxidative stress.

The protein resides in the cytoplasm. It localises to the nucleus. It carries out the reaction S-hydroxy-S-oxy-L-cysteinyl-[peroxiredoxin] + [protein]-dithiol + ATP = S-hydroxy-L-cysteinyl-[peroxiredoxin] + [protein]-disulfide + ADP + phosphate. In terms of biological role, contributes to oxidative stress resistance by reducing cysteine-sulfinic acid formed under exposure to oxidants in a peroxiredoxin. May catalyze the reduction in a multi-step process by acting both as a specific phosphotransferase and a thioltransferase. The chain is Sulfiredoxin (srx1) from Schizosaccharomyces pombe (strain 972 / ATCC 24843) (Fission yeast).